The sequence spans 305 residues: Tyrosine recombinase XerC (305 aa).

The 92-residue stretch at 4-95 (TQIQELIIKW…AIKNFYKFLE (92 aa)) folds into the Core-binding (CB) domain. The 183-residue stretch at 116–298 (LLPKALSEEE…SIKHLETAYV (183 aa)) folds into the Tyr recombinase domain. Residues Arg159, Lys182, His250, Arg253, and His276 contribute to the active site. Tyr285 serves as the catalytic O-(3'-phospho-DNA)-tyrosine intermediate.

The protein belongs to the 'phage' integrase family. XerC subfamily. As to quaternary structure, forms a cyclic heterotetrameric complex composed of two molecules of XerC and two molecules of XerD.

The protein localises to the cytoplasm. Site-specific tyrosine recombinase, which acts by catalyzing the cutting and rejoining of the recombining DNA molecules. The XerC-XerD complex is essential to convert dimers of the bacterial chromosome into monomers to permit their segregation at cell division. It also contributes to the segregational stability of plasmids. This Rickettsia bellii (strain OSU 85-389) protein is Tyrosine recombinase XerC.